Reading from the N-terminus, the 523-residue chain is Transmembrane protein 266 (523 aa).

The Cytoplasmic segment spans residues 1 to 94 (MTNPQPAIEG…VFLLSASLNS (94 aa)). The chain crosses the membrane as a helical span at residues 95 to 115 (FLVACVILVVILLTLELLIDI). The Extracellular portion of the chain corresponds to 116–121 (KLLQFS). A helical membrane pass occupies residues 122 to 142 (SAFQFAGVIHWISLVILSVFF). At 143-161 (SETVLRIVVLGIWDYIENK) the chain is on the cytoplasmic side. A helical transmembrane segment spans residues 162–182 (IEVFDGAVIILSLAPMVASTV). The Extracellular segment spans residues 183-191 (ANGPRSPWD). Residues 192 to 212 (AISLIIMLRIWRVKRVIDAYV) form a helical membrane-spanning segment. The Cytoplasmic segment spans residues 213-523 (LPVKLEMEMV…EQKLHRVPEA (311 aa)). A coiled-coil region spans residues 218-270 (EMEMVIQQYEKAKVIQDEQLERLTQICQEQGFEIRQLRAHLAQQDLDLAAERE). The interval 380–477 (SASRSSVTRA…PELEHRVSLF (98 aa)) is disordered. Positions 382-397 (SRSSVTRAQSDSSQTL) are enriched in low complexity. Positions 398–411 (GSSMDCSTAREEPS) are enriched in polar residues. The segment covering 421 to 430 (LPSQQQVEEA) has biased composition (pro residues).

As to quaternary structure, homodimer; disulfide-linked. Mainly expressed in the cerebellum. Also expressed in cerebral cortex, skeletal muscle and thyroid, but at much lower levels.

The protein resides in the cell membrane. The protein localises to the cell projection. It is found in the dendrite. Its subcellular location is the perikaryon. Functionally, voltage-sensor protein present on the post-synaptic side of glutamatergic mossy fibers and granule cells in the cerebellum. Despite the presence of a voltage-sensor segment, does not form a functional ion channel and its precise role remains unclear. Undergoes both rapid and slow structural rearrangements in response to changes in voltage. Contains a zinc-binding site that can regulate the slow conformational transition. The polypeptide is Transmembrane protein 266 (Homo sapiens (Human)).